Here is a 120-residue protein sequence, read N- to C-terminus: Secreted RxLR effector protein RXLR-C26 (120 aa).

An N-terminal signal peptide occupies residues M1–G29. The short motif at R57 to R77 is the RxLR-dEER element. A glycan (N-linked (GlcNAc...) asparagine) is linked at N71.

Belongs to the RxLR effector family.

It is found in the secreted. It localises to the host cytoplasm. Its subcellular location is the host nucleus. Functionally, secreted effector that does not suppress pattern-triggered immunity (PTI) in plant host. The sequence is that of Secreted RxLR effector protein RXLR-C26 from Plasmopara halstedii (Downy mildew of sunflower).